Reading from the N-terminus, the 297-residue chain is ATP synthase subunit gamma, mitochondrial (297 aa).

It belongs to the ATPase gamma chain family. As to quaternary structure, F-type ATPases have 2 components, CF(1) - the catalytic core - and CF(0) - the membrane proton channel. CF(1) has five subunits: alpha(3), beta(3), gamma(1), delta(1), epsilon(1). CF(0) has three main subunits: a, b and c.

It localises to the mitochondrion. The protein resides in the mitochondrion inner membrane. Mitochondrial membrane ATP synthase (F(1)F(0) ATP synthase or Complex V) produces ATP from ADP in the presence of a proton gradient across the membrane which is generated by electron transport complexes of the respiratory chain. F-type ATPases consist of two structural domains, F(1) - containing the extramembraneous catalytic core, and F(0) - containing the membrane proton channel, linked together by a central stalk and a peripheral stalk. During catalysis, ATP synthesis in the catalytic domain of F(1) is coupled via a rotary mechanism of the central stalk subunits to proton translocation. Part of the complex F(1) domain and the central stalk which is part of the complex rotary element. The gamma subunit protrudes into the catalytic domain formed of alpha(3)beta(3). Rotation of the central stalk against the surrounding alpha(3)beta(3) subunits leads to hydrolysis of ATP in three separate catalytic sites on the beta subunits. The chain is ATP synthase subunit gamma, mitochondrial from Drosophila melanogaster (Fruit fly).